The primary structure comprises 132 residues: Small ribosomal subunit protein uS8 (132 aa).

It belongs to the universal ribosomal protein uS8 family. Part of the 30S ribosomal subunit. Contacts proteins S5 and S12.

Its function is as follows. One of the primary rRNA binding proteins, it binds directly to 16S rRNA central domain where it helps coordinate assembly of the platform of the 30S subunit. The sequence is that of Small ribosomal subunit protein uS8 from Streptococcus thermophilus (strain CNRZ 1066).